Here is a 1176-residue protein sequence, read N- to C-terminus: Surface-layer 125 kDa protein (1176 aa).

An N-terminal signal peptide occupies residues M1–A30. SLH domains lie at A31–E88, G89–E152, and F153–D216.

It is found in the secreted. The protein resides in the cell wall. It localises to the S-layer. In terms of biological role, the S-layer is a paracrystalline mono-layered assembly of proteins which coat the surface of bacteria. The protein is Surface-layer 125 kDa protein of Lysinibacillus sphaericus (Bacillus sphaericus).